A 469-amino-acid polypeptide reads, in one-letter code: SWI/SNF complex subunit SWI3B (469 aa).

Residues 1-42 (MAMKAPDPGGSGEILPSTPSLSETTSGGAAAASKSAQLPSSS) are disordered. The span at 15-42 (LPSTPSLSETTSGGAAAASKSAQLPSSS) shows a compositional bias: low complexity. The SWIRM domain maps to 48–145 (IHVPSYSSWF…YNSSASAKPL (98 aa)). Residues 223-274 (ESKPEWSDKEILLLLEAVMHYGDDWKKVASHVIGRTEKDCVSQFVKLPFGEQ) form the SANT domain. Basic and acidic residues-rich tracts occupy residues 293–306 (DSDIPESEGIDKDG) and 360–369 (DKNASRDPNR). Disordered regions lie at residues 293–314 (DSDIPESEGIDKDGSSPNKRIK) and 360–387 (DKNASRDPNRQDANAASSGETTRNESER). Positions 370 to 380 (QDANAASSGET) are enriched in polar residues. A coiled-coil region spans residues 423–447 (VHFEKLDLEMERSRKQLEEVRNLLF).

As to quaternary structure, homodimers and heterodimers. Interacts with SWI3A, SWI3C, SWI3D, BSH, BRM and FCA (via C-terminus), and (via N-terminus) with HAB1. Interacts with MORC6 and SUVH9. As to expression, expressed in roots, stems, leaves, flowers and siliques.

The protein resides in the nucleus. Component of a multiprotein complex equivalent of the SWI/SNF complex, an ATP-dependent chromatin-remodeling complex, which is required for the positive and negative regulation of gene expression of a large number of genes. It changes chromatin structure by altering DNA-histone contacts within a nucleosome, leading eventually to a change in nucleosome position, thus facilitating or repressing binding of gene-specific transcription factors. May play an essential role in the transition from the vegetative to the reproductive phase of development. May be a positive regulator of ABA signaling. The sequence is that of SWI/SNF complex subunit SWI3B (SWI3B) from Arabidopsis thaliana (Mouse-ear cress).